A 207-amino-acid polypeptide reads, in one-letter code: N-(5'-phosphoribosyl)anthranilate isomerase (207 aa).

It belongs to the TrpF family.

The catalysed reaction is N-(5-phospho-beta-D-ribosyl)anthranilate = 1-(2-carboxyphenylamino)-1-deoxy-D-ribulose 5-phosphate. The protein operates within amino-acid biosynthesis; L-tryptophan biosynthesis; L-tryptophan from chorismate: step 3/5. This chain is N-(5'-phosphoribosyl)anthranilate isomerase, found in Geotalea daltonii (strain DSM 22248 / JCM 15807 / FRC-32) (Geobacter daltonii).